We begin with the raw amino-acid sequence, 390 residues long: Succinate--CoA ligase [ADP-forming] subunit beta (390 aa).

One can recognise an ATP-grasp domain in the interval 9–248; it reads KDILRKFGVS…ISEEDPFEVE (240 aa). ATP-binding positions include Lys50, 57–59, Glu103, Met106, and Glu111; that span reads GRG. 2 residues coordinate Mg(2+): Asn203 and Asp217. Residues Asn268 and 325–327 each bind substrate; that span reads GIV.

Belongs to the succinate/malate CoA ligase beta subunit family. As to quaternary structure, heterotetramer of two alpha and two beta subunits. Mg(2+) is required as a cofactor.

The enzyme catalyses succinate + ATP + CoA = succinyl-CoA + ADP + phosphate. The catalysed reaction is GTP + succinate + CoA = succinyl-CoA + GDP + phosphate. The protein operates within carbohydrate metabolism; tricarboxylic acid cycle; succinate from succinyl-CoA (ligase route): step 1/1. Succinyl-CoA synthetase functions in the citric acid cycle (TCA), coupling the hydrolysis of succinyl-CoA to the synthesis of either ATP or GTP and thus represents the only step of substrate-level phosphorylation in the TCA. The beta subunit provides nucleotide specificity of the enzyme and binds the substrate succinate, while the binding sites for coenzyme A and phosphate are found in the alpha subunit. The sequence is that of Succinate--CoA ligase [ADP-forming] subunit beta from Prosthecochloris aestuarii (strain DSM 271 / SK 413).